A 370-amino-acid polypeptide reads, in one-letter code: MRTSPMPAKFRSVRVVVITGSVTAAPVRVSETLRRLIDVSVLAENSGREPADERRGDFSAHTEPYRRELLAHCYRMTGSLHDAEDLVQETLLRAWKAYEGFAGKSSLRTWLHRIATNTCLTALEGRRRRPLPTGLGRPSADPSGELVERREVSWLEPLPDVTDDPADPSTIVGNRESVRLAFVAALQHLSPRQRAVLLLRDVLQWKSAEVADAIGTSTVAVNSLLQRARSQLQTVRPSAADRLSAPDSPEAQDLLARYIAAFEAYDIDRLVELFTAEAIWEMPPYTGWYQGAQAIVTLIHQQCPAYSPGDMRLISLIANGQPAAAMYMRAGDVHLPFQLHVLDMAADRVSHVVAFLDTTLFPKFGLPDSL.

The segment at 63–129 (EPYRRELLAH…LTALEGRRRR (67 aa)) is sigma-70 factor domain-2. Residues 85–88 (DLVQ) carry the Polymerase core binding motif. Residues 180–232 (LAFVAALQHLSPRQRAVLLLRDVLQWKSAEVADAIGTSTVAVNSLLQRARSQL) form a sigma-70 factor domain-4 region. The H-T-H motif DNA-binding region spans 207–226 (SAEVADAIGTSTVAVNSLLQ).

It belongs to the sigma-70 factor family. ECF subfamily. As to quaternary structure, interacts transiently with the RNA polymerase catalytic core formed by RpoA, RpoB, RpoC and RpoZ (2 alpha, 1 beta, 1 beta' and 1 omega subunit) to form the RNA polymerase holoenzyme that can initiate transcription.

Its function is as follows. Sigma factors are initiation factors that promote the attachment of RNA polymerase to specific initiation sites and are then released. Extracytoplasmic function (ECF) sigma factors are held in an inactive form by a cognate anti-sigma factor until released, although no anti-sigma factor is known for this protein. May be involved in host intracellular survival after infection (strains H37Rv and CDC 1551). A role in the SOS response is controversial; it has been seen in strain CDC 1551 but not in H37Rv. This chain is ECF RNA polymerase sigma factor SigG (sigG), found in Mycobacterium tuberculosis (strain CDC 1551 / Oshkosh).